A 116-amino-acid chain; its full sequence is Holo-[acyl-carrier-protein] synthase (116 aa).

Aspartate 5 and glutamate 50 together coordinate Mg(2+).

Belongs to the P-Pant transferase superfamily. AcpS family. Mg(2+) is required as a cofactor.

The protein resides in the cytoplasm. The catalysed reaction is apo-[ACP] + CoA = holo-[ACP] + adenosine 3',5'-bisphosphate + H(+). Functionally, transfers the 4'-phosphopantetheine moiety from coenzyme A to a Ser of acyl-carrier-protein. The polypeptide is Holo-[acyl-carrier-protein] synthase (Nitratiruptor sp. (strain SB155-2)).